The sequence spans 176 residues: Centromere protein R (176 aa).

A Glycyl lysine isopeptide (Lys-Gly) (interchain with G-Cter in SUMO2) cross-link involves residue Lys-8. The residue at position 17 (Ser-17) is a Phosphoserine. Residues 20 to 50 are DD1; that stretch reads PSKIMRKKSITAFSPTTGTYQLSPFSSPRTP. Lys-22 is covalently cross-linked (Glycyl lysine isopeptide (Lys-Gly) (interchain with G-Cter in SUMO2)). A Phosphoserine modification is found at Ser-28. Positions 34 to 48 are enriched in polar residues; the sequence is PTTGTYQLSPFSSPR. The interval 34–80 is disordered; that stretch reads PTTGTYQLSPFSSPRTPKEQEHRDGPSNGTRKWSVLSSPARQDSTVK. Residues 49–58 are compositionally biased toward basic and acidic residues; the sequence is TPKEQEHRDG. The segment covering 60 to 80 has biased composition (polar residues); it reads SNGTRKWSVLSSPARQDSTVK. The Nuclear localization signal motif lies at 63–66; it reads TRKW. Position 71 is a phosphoserine (Ser-71). Residues 82-112 are a coiled coil; it reads SDGFMMLLSKIERSSEKTMEIMKNLSSLQAL. Positions 118–122 match the LXXLL motif motif; it reads LEDLL. The short motif at 171–175 is the LXXIL motif element; that stretch reads LKAIL.

In terms of assembly, homodimer; mediated by the coiled coil domain. Interacts with CCNA2 and MTA1. Interacts with NFKB1 NF-kappa-B subunit. Component of the CENPA-CAD complex, composed of CENPI, CENPK, CENPL, CENPO, CENPP, CENPQ, CENPR and CENPS. The CENPA-CAD complex interacts with the CENPA-NAC complex, at least composed of CENPA, CENPC, CENPH, CENPM, CENPN, CENPT and CENPU. Interacts with TASOR.

Its subcellular location is the nucleus. It localises to the chromosome. It is found in the centromere. The protein resides in the kinetochore. Its function is as follows. Transcription coregulator that can have both coactivator and corepressor functions. Involved in the coactivation of nuclear receptors for retinoid X (RXRs) and thyroid hormone (TRs) in a ligand-dependent fashion. In contrast, it does not coactivate nuclear receptors for retinoic acid, vitamin D, progesterone receptor, nor glucocorticoid. Acts as a coactivator for estrogen receptor alpha. Acts as a transcriptional corepressor via its interaction with the NFKB1 NF-kappa-B subunit, possibly by interfering with the transactivation domain of NFKB1. Induces apoptosis in breast cancer cells, but not in other cancer cells, via a caspase-2 mediated pathway that involves mitochondrial membrane permeabilization but does not require other caspases. May also act as an inhibitor of cyclin A-associated kinase. Also acts a component of the CENPA-CAD (nucleosome distal) complex, a complex recruited to centromeres which is involved in assembly of kinetochore proteins, mitotic progression and chromosome segregation. May be involved in incorporation of newly synthesized CENPA into centromeres via its interaction with the CENPA-NAC complex. The protein is Centromere protein R (Itgb3bp) of Rattus norvegicus (Rat).